Here is a 257-residue protein sequence, read N- to C-terminus: AN1-type zinc finger protein 2B (257 aa).

2 consecutive AN1-type zinc fingers follow at residues 4–52 (PDLG…QKDI) and 94–142 (KIFT…HPTS). Positions 10, 15, 25, 28, 33, 36, 42, 44, 100, 105, 115, 118, 123, 126, 132, and 134 each coordinate Zn(2+). The interval 141–151 (TSRAGLAAISR) is VCP/p97-interacting motif (VIM). The segment at 153 to 187 (QGLASTSTVPSPSRTLPSSSSPSRATPQLPPRTTS) is disordered. Low complexity predominate over residues 156-179 (ASTSTVPSPSRTLPSSSSPSRATP). Phosphoserine occurs at positions 163, 173, and 187. 2 UIM domains span residues 197 to 216 (SEDEALQRALELSLAEAKPQ) and 221 to 240 (QEEEDLALAQALSASEAEYQ). Cysteine methyl ester is present on cysteine 254. Cysteine 254 carries the S-geranylgeranyl cysteine lipid modification. The short motif at 254–257 (CSLC) is the CAAX motif element. Residues 255–257 (SLC) constitute a propeptide, removed in mature form.

Binds 'Lys-48'-linked polyubiquitin chains of ubiquitinated proteins. Associates with the proteasome complex; upon exposure to arsenite. Interacts (via VIM motif) with VCP; the interaction is direct. Interacts with BAG6. Interacts with IGF1R (nascent precursor form). Interacts with DERL1, FAF2, NPLOC4 and UFD1; probably through VCP. In terms of processing, phosphorylated by MAPK14. Phosphorylation has no effect on association with the proteasome complex.

It is found in the endoplasmic reticulum membrane. In terms of biological role, plays a role in protein homeostasis by regulating both the translocation and the ubiquitin-mediated proteasomal degradation of nascent proteins at the endoplasmic reticulum. It is involved in the regulation of signal-mediated translocation of proteins into the endoplasmic reticulum. It also plays a role in the ubiquitin-mediated proteasomal degradation of proteins for which signal-mediated translocation to the endoplasmic reticulum has failed. May therefore function in the endoplasmic reticulum stress-induced pre-emptive quality control, a mechanism that selectively attenuates the translocation of newly synthesized proteins into the endoplasmic reticulum and reroutes them to the cytosol for proteasomal degradation. By controlling the steady-state expression of the IGF1R receptor, indirectly regulates the insulin-like growth factor receptor signaling pathway. This chain is AN1-type zinc finger protein 2B, found in Rattus norvegicus (Rat).